Consider the following 215-residue polypeptide: MASKVEKTHALPPCCSTESLISSIGLGIFCLVADRLLRFPIIQHNDWLRAISDNIVHGVIGMWSWAVVTGIRKKSDFGEVLLAGFLASVIDVDHFFQARSLSLQAALTLPRRPFLHCSTVIPIAVLSVKLAVHLFKLRDSWRFLPWMILVSWTSHHIRDGIRHGLWICPFGKTPPLPSSFYVISTLSLPHLCSFLMYLTGTRQTVSSKYGMRIDV.

The next 3 membrane-spanning stretches (helical) occupy residues 77-97 (FGEVLLAGFLASVIDVDHFFQ), 114-134 (FLHCSTVIPIAVLSVKLAVHL), and 178-198 (SSFYVISTLSLPHLCSFLMYL).

The protein localises to the membrane. The protein is Transmembrane protein 267 of Mus musculus (Mouse).